The chain runs to 270 residues: Interleukin-2 receptor subunit alpha (270 aa).

A signal peptide spans 1–21 (MEPSLLMWGFFTFTMIPGCMA). In terms of domain architecture, Sushi 1 spans 22–84 (GACVQQPPSL…FWENKCQCMP (63 aa)). At 22–245 (GACVQQPPSL…QPIIFTTQYQ (224 aa)) the chain is on the extracellular side. Intrachain disulfides connect Cys24-Cys67, Cys49-Cys80, and Cys51-Cys82. Asn33 and Asn70 each carry an N-linked (GlcNAc...) asparagine glycan. The disordered stretch occupies residues 87–124 (SPRIPVKQVTPRPEEQKERKTTETQGQMQPPNQANLPG). Basic and acidic residues predominate over residues 98–108 (RPEEQKERKTT). Positions 112–121 (GQMQPPNQAN) are enriched in polar residues. A Sushi 2 domain is found at 124-191 (GHCKEPPPWE…WTQPKLKCKS (68 aa)). 2 disulfides stabilise this stretch: Cys126/Cys171 and Cys153/Cys189. N-linked (GlcNAc...) asparagine glycans are attached at residues Asn164 and Asn195. The segment at 190–225 (KSEKENGSFPEPQMSTAAPPTTKTSLPTRTKGTTDS) is disordered. Polar residues predominate over residues 202–225 (QMSTAAPPTTKTSLPTRTKGTTDS). Asn227 is a glycosylation site (N-linked (GlcNAc...) asparagine). The helical transmembrane segment at 246–264 (LAVAGCVLLLLSILLLSGL) threads the bilayer. Residues 265–270 (TWQRRR) lie on the Cytoplasmic side of the membrane.

Non-covalent dimer of an alpha and a beta subunit. IL2R exists in 3 different forms: a high affinity dimer, an intermediate affinity monomer (beta subunit), and a low affinity monomer (alpha subunit). The high and intermediate affinity forms also associate with a gamma subunit.

The protein localises to the membrane. In terms of biological role, receptor for interleukin-2. The receptor is involved in the regulation of immune tolerance by controlling regulatory T cells (TREGs) activity. TREGs suppress the activation and expansion of autoreactive T-cells. In Sus scrofa (Pig), this protein is Interleukin-2 receptor subunit alpha (IL2RA).